Consider the following 313-residue polypeptide: Proline-rich protein 3 (313 aa).

The N-terminal stretch at 1-22 (MAITRSSLAICLILSLVTITTA) is a signal peptide. Residues 27–312 (PSSPPVYKSP…GPKAAPATPK (286 aa)) are 35 X 5 AA approximate repeats. Repeat copies occupy residues 30-34 (PPVYK), 35-39 (SPEHK), 40-43 (PTLP), 44-48 (SPVYT), 49-53 (PPVYK), 54-57 (PTLS), 58-62 (PPVYT), 64-67 (PTIP), 68-72 (PPVYT), 73-77 (PPVYK), 82-86 (PPVYT), 87-91 (KPTIP), 92-96 (PPVYT), 97-101 (PPVYK), 102-105 (PTLS), 106-110 (PPVYT), 111-115 (KPTIP), 116-120 (PPVYT), 121-125 (PPVYK), 126-131 (PTPVYT), 132-136 (KPTIP), 137-141 (PPVYT), 142-146 (PPVYK), 147-150 (PTPS), 151-155 (PPVYK), 157-163 (SPSYSSP), 164-168 (PPPYV), 169-174 (PKPTYT), 175-181 (PTTKPYV), 182-186 (PEILK), 187-229 (AVDG…VIYS), 258-262 (SPVET), 266-270 (PTNVN), 298-302 (PFYYT), and 308-312 (PATPK).

Belongs to the plant proline-rich protein superfamily. ENOD12 family. In terms of tissue distribution, exclusively expressed in roots, particularly in root hairs-containing regions, and especially in root hairs.

Its subcellular location is the secreted. It is found in the cell wall. May contribute to cell wall structure in root hairs. In Arabidopsis thaliana (Mouse-ear cress), this protein is Proline-rich protein 3 (PRP3).